Here is an 829-residue protein sequence, read N- to C-terminus: G-type lectin S-receptor-like serine/threonine-protein kinase At1g34300 (829 aa).

An N-terminal signal peptide occupies residues 1–25; the sequence is MAVKTPFLKLLPLLLLLLHFPFSFS. 2 Bulb-type lectin domains span residues 26-140 and 143-260; these read TIPL…SSFD and TDTI…PVNA. Topologically, residues 26–421 are extracellular; the sequence is TIPLGSVIYA…KGDDNNSKVH (396 aa). 8 N-linked (GlcNAc...) asparagine glycosylation sites follow: asparagine 46, asparagine 98, asparagine 130, asparagine 151, asparagine 172, asparagine 178, asparagine 189, and asparagine 195. Residues 264 to 301 enclose the EGF-like domain; sequence AVDQCLVYGYCGNFGICSYNDTNPICSCPSRNFDFVDV. 5 disulfide bridges follow: cysteine 268–cysteine 280, cysteine 274–cysteine 289, cysteine 317–cysteine 399, cysteine 350–cysteine 373, and cysteine 354–cysteine 360. 2 N-linked (GlcNAc...) asparagine glycosylation sites follow: asparagine 283 and asparagine 320. Positions 317–399 constitute an Apple domain; it reads CSGNTTMLDL…VPSTSYVKVC (83 aa). Asparagine 416 is a glycosylation site (N-linked (GlcNAc...) asparagine). Residues 422–442 traverse the membrane as a helical segment; that stretch reads LWIVAVAVIAGLLGLVAVEIG. The Cytoplasmic segment spans residues 443-829; sequence LWWCCCRKNP…RISEGSMLGS (387 aa). One can recognise a Protein kinase domain in the interval 484–759; sequence KSFKEKLGAG…GKVVQMLEGI (276 aa). Residues 490-498 and lysine 512 each bind ATP; that span reads LGAGGFGTV. Phosphoserine is present on serine 532. The tract at residues 572-589 is caM-binding; sequence DSAKFLTWEYRFNIALGT. Aspartate 608 acts as the Proton acceptor in catalysis. 2 positions are modified to phosphoserine: serine 625 and serine 799.

This sequence belongs to the protein kinase superfamily. Ser/Thr protein kinase family.

It localises to the cell membrane. The enzyme catalyses L-seryl-[protein] + ATP = O-phospho-L-seryl-[protein] + ADP + H(+). It carries out the reaction L-threonyl-[protein] + ATP = O-phospho-L-threonyl-[protein] + ADP + H(+). This chain is G-type lectin S-receptor-like serine/threonine-protein kinase At1g34300, found in Arabidopsis thaliana (Mouse-ear cress).